An 88-amino-acid chain; its full sequence is uncharacterized protein (88 aa).

Transmembrane regions (helical) follow at residues 3–23 (VFILFYLWIVPIVIGILCSVA), 33–53 (VAPGIAMIVLSIISLITAFTA), and 61–81 (FIGGMFLFGTFLVGSAFPFFF).

It is found in the cell membrane. This is an uncharacterized protein from Bacillus subtilis (strain 168).